The chain runs to 82 residues: Small ribosomal subunit protein bS18 (82 aa).

It belongs to the bacterial ribosomal protein bS18 family. As to quaternary structure, part of the 30S ribosomal subunit. Forms a tight heterodimer with protein bS6.

In terms of biological role, binds as a heterodimer with protein bS6 to the central domain of the 16S rRNA, where it helps stabilize the platform of the 30S subunit. The polypeptide is Small ribosomal subunit protein bS18 (Chlamydia caviae (strain ATCC VR-813 / DSM 19441 / 03DC25 / GPIC) (Chlamydophila caviae)).